Here is a 252-residue protein sequence, read N- to C-terminus: Phosphate import ATP-binding protein PstB 1 (252 aa).

The ABC transporter domain occupies 6-247 (LQIRDLSVYY…PKRKETEDYI (242 aa)). An ATP-binding site is contributed by 38–45 (GPSGSGKS).

Belongs to the ABC transporter superfamily. Phosphate importer (TC 3.A.1.7) family. The complex is composed of two ATP-binding proteins (PstB), two transmembrane proteins (PstC and PstA) and a solute-binding protein (PstS).

It localises to the cell membrane. The catalysed reaction is phosphate(out) + ATP + H2O = ADP + 2 phosphate(in) + H(+). Functionally, part of the ABC transporter complex PstSACB involved in phosphate import. Responsible for energy coupling to the transport system. This is Phosphate import ATP-binding protein PstB 1 from Streptococcus pyogenes serotype M6 (strain ATCC BAA-946 / MGAS10394).